The chain runs to 121 residues: Large ribosomal subunit protein bL12 (121 aa).

It belongs to the bacterial ribosomal protein bL12 family. As to quaternary structure, homodimer. Part of the ribosomal stalk of the 50S ribosomal subunit. Forms a multimeric L10(L12)X complex, where L10 forms an elongated spine to which 2 to 4 L12 dimers bind in a sequential fashion. Binds GTP-bound translation factors.

Forms part of the ribosomal stalk which helps the ribosome interact with GTP-bound translation factors. Is thus essential for accurate translation. The protein is Large ribosomal subunit protein bL12 of Xanthomonas campestris pv. campestris (strain B100).